The following is a 170-amino-acid chain: uncharacterized protein (170 aa).

A run of 3 helical transmembrane segments spans residues 6–26 (PFYF…ILLI), 31–51 (LLFI…LIYI), and 91–111 (IYFS…IVAF).

It to M.jannaschii MJ1249.1, MJ0210.1 and MJ0785.1.

It is found in the cell membrane. This is an uncharacterized protein from Methanocaldococcus jannaschii (strain ATCC 43067 / DSM 2661 / JAL-1 / JCM 10045 / NBRC 100440) (Methanococcus jannaschii).